The primary structure comprises 292 residues: Pyridoxal 5'-phosphate synthase subunit PdxS (292 aa).

Aspartate 22 lines the D-ribose 5-phosphate pocket. The Schiff-base intermediate with D-ribose 5-phosphate role is filled by lysine 79. Glycine 151 serves as a coordination point for D-ribose 5-phosphate. Arginine 163 provides a ligand contact to D-glyceraldehyde 3-phosphate. D-ribose 5-phosphate-binding positions include glycine 212 and 233 to 234 (GS).

The protein belongs to the PdxS/SNZ family. In terms of assembly, in the presence of PdxT, forms a dodecamer of heterodimers.

It catalyses the reaction aldehydo-D-ribose 5-phosphate + D-glyceraldehyde 3-phosphate + L-glutamine = pyridoxal 5'-phosphate + L-glutamate + phosphate + 3 H2O + H(+). It functions in the pathway cofactor biosynthesis; pyridoxal 5'-phosphate biosynthesis. Functionally, catalyzes the formation of pyridoxal 5'-phosphate from ribose 5-phosphate (RBP), glyceraldehyde 3-phosphate (G3P) and ammonia. The ammonia is provided by the PdxT subunit. Can also use ribulose 5-phosphate and dihydroxyacetone phosphate as substrates, resulting from enzyme-catalyzed isomerization of RBP and G3P, respectively. In Thermoanaerobacter sp. (strain X514), this protein is Pyridoxal 5'-phosphate synthase subunit PdxS.